Consider the following 441-residue polypeptide: Phosphoribosylamine--glycine ligase (441 aa).

One can recognise an ATP-grasp domain in the interval 112–319; that stretch reads RNFMKKYGIE…FTEIMSAVVK (208 aa). An ATP-binding site is contributed by 139 to 196; sequence IEKLGDVAVKPSGLTGGKGVKVMGDQLPDLKAAKDYTSELLEKGPVVIEERFIGEEFT. Positions 277, 289, and 291 each coordinate Mg(2+). Gln277, Glu289, and Asn291 together coordinate Mn(2+).

Belongs to the GARS family. The cofactor is Mg(2+). Requires Mn(2+) as cofactor.

The enzyme catalyses 5-phospho-beta-D-ribosylamine + glycine + ATP = N(1)-(5-phospho-beta-D-ribosyl)glycinamide + ADP + phosphate + H(+). It functions in the pathway purine metabolism; IMP biosynthesis via de novo pathway; N(1)-(5-phospho-D-ribosyl)glycinamide from 5-phospho-alpha-D-ribose 1-diphosphate: step 2/2. In Methanosarcina acetivorans (strain ATCC 35395 / DSM 2834 / JCM 12185 / C2A), this protein is Phosphoribosylamine--glycine ligase.